We begin with the raw amino-acid sequence, 192 residues long: Ion-translocating oxidoreductase complex subunit A (192 aa).

A run of 6 helical transmembrane segments spans residues 5–25, 38–58, 72–92, 102–122, 134–154, and 171–191; these read LLLL…FLGL, AIGM…LSFL, LRTM…EMLV, ALGI…VALL, AIYG…FSAM, and AIAM…AGLI.

The protein belongs to the NqrDE/RnfAE family. As to quaternary structure, the complex is composed of six subunits: RnfA, RnfB, RnfC, RnfD, RnfE and RnfG.

The protein localises to the cell inner membrane. In terms of biological role, part of a membrane-bound complex that couples electron transfer with translocation of ions across the membrane. This is Ion-translocating oxidoreductase complex subunit A from Shewanella denitrificans (strain OS217 / ATCC BAA-1090 / DSM 15013).